Consider the following 218-residue polypeptide: Cytidylate kinase (218 aa).

ATP is bound at residue 11-19 (GPGASGKGT).

Belongs to the cytidylate kinase family. Type 1 subfamily.

It localises to the cytoplasm. It carries out the reaction CMP + ATP = CDP + ADP. The enzyme catalyses dCMP + ATP = dCDP + ADP. The protein is Cytidylate kinase of Neisseria gonorrhoeae (strain ATCC 700825 / FA 1090).